A 378-amino-acid chain; its full sequence is Phospho-N-acetylmuramoyl-pentapeptide-transferase (378 aa).

Transmembrane regions (helical) follow at residues 27 to 47 (TAFASLTALFLCIALGPWLIN), 74 to 94 (TMGGVLIVISIVIPTLLWADL), 96 to 116 (YPYVWIALAGLLGYGWIGFLD), 135 to 155 (LVYQFIMGFAFAASLLVMRAY), 184 to 204 (WTYVIGVAPFCIFVALVVVFY), 216 to 236 (GLAIGLMVIAAGALTVLAYAG), 256 to 276 (LTIFCGSMTGASLGFLWYNAH), 280 to 300 (IFMGDVGSLGLGGAMAVVAVL), 305 to 325 (ILLLFIGGIFVLEAFSVILQV), and 355 to 375 (KIIARFWIAGLVLALFALTTL).

It belongs to the glycosyltransferase 4 family. MraY subfamily. Requires Mg(2+) as cofactor.

It localises to the cell inner membrane. It carries out the reaction UDP-N-acetyl-alpha-D-muramoyl-L-alanyl-gamma-D-glutamyl-meso-2,6-diaminopimeloyl-D-alanyl-D-alanine + di-trans,octa-cis-undecaprenyl phosphate = di-trans,octa-cis-undecaprenyl diphospho-N-acetyl-alpha-D-muramoyl-L-alanyl-D-glutamyl-meso-2,6-diaminopimeloyl-D-alanyl-D-alanine + UMP. It functions in the pathway cell wall biogenesis; peptidoglycan biosynthesis. Functionally, catalyzes the initial step of the lipid cycle reactions in the biosynthesis of the cell wall peptidoglycan: transfers peptidoglycan precursor phospho-MurNAc-pentapeptide from UDP-MurNAc-pentapeptide onto the lipid carrier undecaprenyl phosphate, yielding undecaprenyl-pyrophosphoryl-MurNAc-pentapeptide, known as lipid I. The protein is Phospho-N-acetylmuramoyl-pentapeptide-transferase of Solibacter usitatus (strain Ellin6076).